The following is a 327-amino-acid chain: Delta-aminolevulinic acid dehydratase (327 aa).

Positions 119, 121, and 129 each coordinate Zn(2+). The active-site Schiff-base intermediate with substrate is Lys-198. Arg-208 and Arg-220 together coordinate 5-aminolevulinate. Glu-236 contacts Mg(2+). Catalysis depends on Lys-251, which acts as the Schiff-base intermediate with substrate. 5-aminolevulinate-binding residues include Ser-277 and Tyr-316.

Belongs to the ALAD family. As to quaternary structure, homooctamer. Requires Zn(2+) as cofactor.

The catalysed reaction is 2 5-aminolevulinate = porphobilinogen + 2 H2O + H(+). It functions in the pathway porphyrin-containing compound metabolism; protoporphyrin-IX biosynthesis; coproporphyrinogen-III from 5-aminolevulinate: step 1/4. Catalyzes an early step in the biosynthesis of tetrapyrroles. Binds two molecules of 5-aminolevulinate per subunit, each at a distinct site, and catalyzes their condensation to form porphobilinogen. This Synechocystis sp. (strain ATCC 27184 / PCC 6803 / Kazusa) protein is Delta-aminolevulinic acid dehydratase (hemB).